We begin with the raw amino-acid sequence, 264 residues long: Exosome complex component Rrp4 (264 aa).

Residues 65 to 137 (GDNVLGKIVD…EVNNIELTTK (73 aa)) form the S1 motif domain. Residues 147-206 (RGGQIIKITSSKVPRVIGKGGSMINMIKKLTQSRIIVGQNGWIWISSKNPELEKLAIEAI) enclose the KH domain. Residues 244-258 (SLEEETQEETVMEND) show a composition bias toward acidic residues. The interval 244-264 (SLEEETQEETVMENDVEARGP) is disordered.

It belongs to the RRP4 family. Component of the archaeal exosome complex. Forms a trimer of Rrp4 and/or Csl4 subunits. The trimer associates with a hexameric ring-like arrangement composed of 3 Rrp41-Rrp42 heterodimers.

The protein resides in the cytoplasm. In terms of biological role, non-catalytic component of the exosome, which is a complex involved in RNA degradation. Increases the RNA binding and the efficiency of RNA degradation. Confers strong poly(A) specificity to the exosome. This Pyrococcus furiosus (strain ATCC 43587 / DSM 3638 / JCM 8422 / Vc1) protein is Exosome complex component Rrp4.